A 239-amino-acid chain; its full sequence is Protein canopy homolog 4 (239 aa).

An N-terminal signal peptide occupies residues 1–20 (MGPVRLGTLLFILTVYGAWA). Disulfide bonds link Cys37-Cys195, Cys40-Cys183, and Cys93-Cys155. Positions 199–239 (TWTGKEKITDGQEKTEEEEQDQEEEEMTNTPVHSQHDPEDL) are disordered. Over residues 201–212 (TGKEKITDGQEK) the composition is skewed to basic and acidic residues. Residues 213-225 (TEEEEQDQEEEEM) show a composition bias toward acidic residues.

Belongs to the canopy family. In terms of assembly, interacts with TLR4.

The protein localises to the secreted. Plays a role in the regulation of the cell surface expression of TLR4. The protein is Protein canopy homolog 4 (CNPY4) of Bos taurus (Bovine).